Reading from the N-terminus, the 487-residue chain is Arginine ADP-riboxanase CopC (487 aa).

Polar residues predominate over residues Met-1–Lys-12. A disordered region spans residues Met-1 to Gly-27. NAD(+) is bound by residues His-137, Gln-138, Ser-139, Leu-143, Ala-150, Ala-152, Asn-154, and Leu-157. His-137 serves as a coordination point for nicotinamide. Residues Ser-139 and Leu-143 each contribute to the ADP-D-ribose site. ADP-D-ribose-binding residues include Ala-152, Asn-154, Leu-157, Gly-166, Asn-167, Thr-168, and Phe-183. Asn-167 provides a ligand contact to NAD(+). Position 183 (Phe-183) interacts with NAD(+). Nicotinamide-binding residues include Phe-183, Phe-184, His-202, and Phe-207. His-202 is an NAD(+) binding site. Residues Phe-207 and Asp-230 each coordinate ADP-D-ribose. The NAD(+) site is built by Asp-230 and Glu-325. Glu-325 contacts nicotinamide. Glu-325 is an active-site residue. ANK repeat units lie at residues Asp-368–Asp-398 and Ser-444–Glu-476.

Belongs to the OspC family. Interacts with host calmodulin (CALM1, CALM2 and/or CALM3); specifically interacts with the apo form of calmodulin and calmodulin-binding is required to mediate arginine ADP-riboxanation of host caspases.

The protein resides in the secreted. It is found in the host cytoplasm. It carries out the reaction L-arginyl-[protein] + NAD(+) = ADP-riboxanated L-argininyl-[protein] + nicotinamide + NH4(+) + H(+). Its activity is regulated as follows. Interaction with host calmodulin (CALM1, CALM2 and/or CALM3) is required to mediate arginine ADP-riboxanation of host caspases. In terms of biological role, ADP-riboxanase effector that inhibits host cell programmed cell death. Acts by mediating arginine ADP-riboxanation of host caspases (CASP3, CASP7, CASP8 and CASP9), blocking their processing and activation. ADP-riboxanation of host apoptotic caspases (CASP3, CASP7, CASP8 and CASP9) prevents their activation, thereby inhibiting host cell apoptosis. ADP-riboxanation of host CASP8 also inhibits host cell necroptosis. ADP-riboxanation of host CASP3 also abolishes pyroptosis by preventing its ability to cleave GSDME. May also able to inactivate CASP4/CASP11, blocking inhibiting LPS-induced pyroptosis; however this activity is unsure in vivo. ADP-riboxanation takes place in several steps: CopC first binds host caspases and NAD(+); NAD(+) is hydrolyzed to nicotinamide and ADP-D-ribose. CopC then transfers the ADP-D-ribose to the modified arginine of caspases and forms the ADP-D-ribose-deacylization on arginine, leading to deamination to remove one N-omega group on target arginine. This chain is Arginine ADP-riboxanase CopC, found in Chromobacterium violaceum (strain ATCC 12472 / DSM 30191 / JCM 1249 / CCUG 213 / NBRC 12614 / NCIMB 9131 / NCTC 9757 / MK).